A 54-amino-acid chain; its full sequence is MCTTLFLLSTLAMLWRRRFANRVQPEPNGVDGAVSGSSLETDLQSSGREKEPLK.

A lipid anchor (S-palmitoyl cysteine) is attached at Cys2. The disordered stretch occupies residues 24–54; the sequence is QPEPNGVDGAVSGSSLETDLQSSGREKEPLK. Positions 35–46 are enriched in polar residues; the sequence is SGSSLETDLQSS.

It belongs to the PRCD family. As to quaternary structure, interacts with RHO/rhodopsin; the interaction promotes PRCD stability. In terms of processing, palmitoylated at Cys-2. Palmitoylation is essential for protein stability and trafficking to the photoreceptor outer segment, but does not appear to be essential for membrane localization. Probably palmitoylated by ZDHHC3. Post-translationally, phosphorylated. As to expression, expressed in retina (at protein level).

Its subcellular location is the cell projection. It is found in the cilium. The protein localises to the photoreceptor outer segment. It localises to the membrane. The protein resides in the endoplasmic reticulum. Its subcellular location is the golgi apparatus. In terms of biological role, involved in vision. This is Photoreceptor disk component PRCD from Bos taurus (Bovine).